Consider the following 510-residue polypeptide: NAD(P)H-quinone oxidoreductase subunit 2, chloroplastic (510 aa).

The next 12 helical transmembrane spans lie at 24–44 (LLLF…GLIL), 59–79 (WFYF…FFRW), 99–119 (IFQF…VEYI), 124–144 (MAIT…MFLC), 149–169 (LITI…LSGY), 184–204 (LLMG…LYGL), 229–249 (ISIA…PAPF), 295–315 (WHLL…LIAL), 323–343 (MLAY…IVGD), 354–374 (YMLF…SFGL), 395–415 (ALSS…AGFF), and 418–438 (LYLF…IGLL).

It belongs to the complex I subunit 2 family. In terms of assembly, NDH is composed of at least 16 different subunits, 5 of which are encoded in the nucleus.

It localises to the plastid. Its subcellular location is the chloroplast thylakoid membrane. The enzyme catalyses a plastoquinone + NADH + (n+1) H(+)(in) = a plastoquinol + NAD(+) + n H(+)(out). It catalyses the reaction a plastoquinone + NADPH + (n+1) H(+)(in) = a plastoquinol + NADP(+) + n H(+)(out). NDH shuttles electrons from NAD(P)H:plastoquinone, via FMN and iron-sulfur (Fe-S) centers, to quinones in the photosynthetic chain and possibly in a chloroplast respiratory chain. The immediate electron acceptor for the enzyme in this species is believed to be plastoquinone. Couples the redox reaction to proton translocation, and thus conserves the redox energy in a proton gradient. The protein is NAD(P)H-quinone oxidoreductase subunit 2, chloroplastic of Coelogyne cristata (Orchid).